The sequence spans 186 residues: uncharacterized protein (186 aa).

The region spanning 1 to 181 is the Macro domain; that stretch reads MVSFSYKGNL…TFVSLASDFL (181 aa).

It belongs to the MacroD-type family.

This is an uncharacterized protein from Thermoplasma volcanium (strain ATCC 51530 / DSM 4299 / JCM 9571 / NBRC 15438 / GSS1).